The primary structure comprises 341 residues: Ketol-acid reductoisomerase (NADP(+)) (341 aa).

The KARI N-terminal Rossmann domain occupies 2–182; sequence TDIVYDKDAD…GGLRAGGIRT (181 aa). NADP(+) contacts are provided by residues 25 to 28, lysine 48, serine 51, serine 53, and 83 to 86; these read YGSQ and DQHQ. Residue histidine 108 is part of the active site. Glycine 134 lines the NADP(+) pocket. Residues 183–328 form the KARI C-terminal knotted domain; that stretch reads TFTEETETDL…RELRKLFAWN (146 aa). Positions 191, 195, 227, and 231 each coordinate Mg(2+). Serine 252 provides a ligand contact to substrate.

Belongs to the ketol-acid reductoisomerase family. The cofactor is Mg(2+).

It catalyses the reaction (2R)-2,3-dihydroxy-3-methylbutanoate + NADP(+) = (2S)-2-acetolactate + NADPH + H(+). The enzyme catalyses (2R,3R)-2,3-dihydroxy-3-methylpentanoate + NADP(+) = (S)-2-ethyl-2-hydroxy-3-oxobutanoate + NADPH + H(+). It functions in the pathway amino-acid biosynthesis; L-isoleucine biosynthesis; L-isoleucine from 2-oxobutanoate: step 2/4. It participates in amino-acid biosynthesis; L-valine biosynthesis; L-valine from pyruvate: step 2/4. Involved in the biosynthesis of branched-chain amino acids (BCAA). Catalyzes an alkyl-migration followed by a ketol-acid reduction of (S)-2-acetolactate (S2AL) to yield (R)-2,3-dihydroxy-isovalerate. In the isomerase reaction, S2AL is rearranged via a Mg-dependent methyl migration to produce 3-hydroxy-3-methyl-2-ketobutyrate (HMKB). In the reductase reaction, this 2-ketoacid undergoes a metal-dependent reduction by NADPH to yield (R)-2,3-dihydroxy-isovalerate. This chain is Ketol-acid reductoisomerase (NADP(+)), found in Clavibacter michiganensis subsp. michiganensis (strain NCPPB 382).